The primary structure comprises 502 residues: tRNA-specific adenosine deaminase 1 (502 aa).

The 439-residue stretch at Ser-63–Phe-501 folds into the A to I editase domain. His-87 lines the Zn(2+) pocket. Catalysis depends on Glu-89, which acts as the Proton donor. Residues Arg-93 and Arg-94 each coordinate 1D-myo-inositol hexakisphosphate. Residue Cys-142 participates in Zn(2+) binding. Positions Ser-174–Thr-194 are disordered. Ser-191 carries the phosphoserine modification. Zn(2+) is bound at residue Cys-299. Positions 302, 305, 435, and 470 each coordinate 1D-myo-inositol hexakisphosphate.

Belongs to the ADAT1 family. Requires 1D-myo-inositol hexakisphosphate as cofactor. Ubiquitously expressed.

It carries out the reaction adenosine(37) in tRNA(Ala) + H2O + H(+) = inosine(37) in tRNA(Ala) + NH4(+). In terms of biological role, specifically deaminates adenosine-37 to inosine in tRNA-Ala. The protein is tRNA-specific adenosine deaminase 1 (ADAT1) of Homo sapiens (Human).